A 92-amino-acid chain; its full sequence is Defensin-like protein 96 (92 aa).

The N-terminal stretch at methionine 1–glycine 29 is a signal peptide. 4 disulfide bridges follow: cysteine 33/cysteine 80, cysteine 40/cysteine 65, cysteine 49/cysteine 77, and cysteine 53/cysteine 79.

The protein belongs to the DEFL family.

The protein localises to the secreted. This Arabidopsis thaliana (Mouse-ear cress) protein is Defensin-like protein 96.